The sequence spans 545 residues: Chaperonin GroEL (545 aa).

Residues 29–32 (TLGP), Lys-50, 86–90 (DGTTT), Gly-413, 479–481 (NAA), and Asp-496 each bind ATP. The segment at 525-545 (KPEKEKAPAAAGAPDMGGMDF) is disordered. Residues 532–545 (PAAAGAPDMGGMDF) are compositionally biased toward low complexity.

It belongs to the chaperonin (HSP60) family. Forms a cylinder of 14 subunits composed of two heptameric rings stacked back-to-back. Interacts with the co-chaperonin GroES.

It localises to the cytoplasm. It catalyses the reaction ATP + H2O + a folded polypeptide = ADP + phosphate + an unfolded polypeptide.. Functionally, together with its co-chaperonin GroES, plays an essential role in assisting protein folding. The GroEL-GroES system forms a nano-cage that allows encapsulation of the non-native substrate proteins and provides a physical environment optimized to promote and accelerate protein folding. This chain is Chaperonin GroEL, found in Deinococcus geothermalis (strain DSM 11300 / CIP 105573 / AG-3a).